Consider the following 78-residue polypeptide: Ubiquinol-cytochrome-c reductase complex assembly factor 3 (78 aa).

Over 1–5 (MSGMR) the chain is Mitochondrial matrix. Residues 6-26 (ILTGSVALGGLTYAIWIIFSP) traverse the membrane as a helical segment. The Mitochondrial intermembrane portion of the chain corresponds to 27–78 (GEERKKEILKSLPEANPVRMEETRKRNAIMLQVLKDAAETNDNIARGFGSQK).

The protein belongs to the UQCC3 family. As to quaternary structure, associates with the ubiquinol-cytochrome c reductase complex (mitochondrial respiratory chain complex III or cytochrome b-c1 complex).

It is found in the mitochondrion inner membrane. Its function is as follows. Required for the assembly of the ubiquinol-cytochrome c reductase complex (mitochondrial respiratory chain complex III or cytochrome b-c1 complex), mediating cytochrome b recruitment and probably stabilization within the complex. Thereby, plays an important role in ATP production by mitochondria. Cardiolipin-binding protein, it may also control the cardiolipin composition of mitochondria membranes and their morphology. The protein is Ubiquinol-cytochrome-c reductase complex assembly factor 3 of Danio rerio (Zebrafish).